We begin with the raw amino-acid sequence, 131 residues long: U-scoloptoxin-Er5e (131 aa).

Positions 1 to 22 (MKTNCEFPLLCLLIVLVANVEG) are cleaved as a signal peptide. A propeptide spanning residues 23–94 (EVEDNELKMV…KRLWRNWERR (72 aa)) is cleaved from the precursor. 3 RLWRNWE repeats span residues 34–40 (RLWRNWE), 61–67 (RLWRNWE), and 86–92 (RLWRNWE). Pyrrolidone carboxylic acid is present on glutamine 95. One copy of the RLWRNWE 4; approximate repeat lies at 107-113 (ELWRNWE). The propeptide occupies 112-131 (WEDLKRRQVVDLNDEQKTTG).

The protein belongs to the scoloptoxin-08 family. In terms of tissue distribution, expressed by the venom gland.

It localises to the secreted. This Ethmostigmus rubripes (Giant centipede) protein is U-scoloptoxin-Er5e.